Consider the following 214-residue polypeptide: uncharacterized protein (214 aa).

Residues L10–S30 traverse the membrane as a helical segment. Over residues S147–P157 the composition is skewed to polar residues. Residues S147–F166 form a disordered region.

The protein localises to the membrane. This is an uncharacterized protein from Schizosaccharomyces pombe (strain 972 / ATCC 24843) (Fission yeast).